The primary structure comprises 103 residues: UPF0235 protein RL4503 (103 aa).

The protein belongs to the UPF0235 family.

In Rhizobium johnstonii (strain DSM 114642 / LMG 32736 / 3841) (Rhizobium leguminosarum bv. viciae), this protein is UPF0235 protein RL4503.